The primary structure comprises 579 residues: MRFKELAELFEELEKTTSHREIVRKISEFFKNLRGDEVKDSAYLFLGSTGPAFENTTLGIKDMLAIRAIAGAYGVTREDVRKRYARTGDLGDVAFELSKKRESSLTIEDVFQRLLQIRETSGKGSQEEKTALFSDILQKATPEEGKYIVRLVLGRLRLGFGDQFLLEAFAIAFTGDKKHAAKIKESYSVCTDIGELAKILAENGARATGFISIKPGRPVKSMLSQRVESFEELEKRVKGKKAAEEKYDGERVQVHKTGEGIKAFSRRLEDITSQYPEIIEDVRKTVPANEIVLDGEIVAYAELERNGNRIEEFYPFQNLMQRRRKYEIENYRKKCPVAVFFFDILYLNGEPLLKRPYPERRALLEMNVVESGIIRLSKRIVTESVEEIEDFFNETIEKGLEGIVVKSMSSNSYYEAGKRSWFWFKWKQEYSEGMRETFDLVVVGSYYGRGRRKGSFGALLCAVLNKEGQRFETLTKVGTGFTEADAEEINRLLSDHIVSEIPKGVSIKKGMLPDIFIEPAVVIEVLGSEITNSPGHTAGEGEEETGLALRFPRFLRIRHDKTPYDAMTVKEVRDLKDGT.

Position 244 (Glu244) interacts with ATP. Lys246 acts as the N6-AMP-lysine intermediate in catalysis. ATP is bound by residues Arg251, Arg266, Glu296, Phe342, Arg419, and Lys425.

It belongs to the ATP-dependent DNA ligase family. Mg(2+) is required as a cofactor.

It catalyses the reaction ATP + (deoxyribonucleotide)n-3'-hydroxyl + 5'-phospho-(deoxyribonucleotide)m = (deoxyribonucleotide)n+m + AMP + diphosphate.. In terms of biological role, DNA ligase that seals nicks in double-stranded DNA during DNA replication, DNA recombination and DNA repair. The chain is DNA ligase 1 from Methanosarcina mazei (strain ATCC BAA-159 / DSM 3647 / Goe1 / Go1 / JCM 11833 / OCM 88) (Methanosarcina frisia).